Consider the following 319-residue polypeptide: ATP-dependent 6-phosphofructokinase (319 aa).

An ATP-binding site is contributed by G11. 21 to 25 (RAVAR) is an ADP binding site. ATP contacts are provided by residues 72–73 (RY) and 102–105 (GDGS). D103 lines the Mg(2+) pocket. 125 to 127 (TID) contributes to the substrate binding site. D127 serves as the catalytic Proton acceptor. R154 serves as a coordination point for ADP. Residues R162 and 169–171 (MGR) contribute to the substrate site. ADP contacts are provided by residues 185 to 187 (GAE) and R211. Substrate-binding positions include E222, R243, and 249 to 252 (HIVR).

The protein belongs to the phosphofructokinase type A (PFKA) family. ATP-dependent PFK group I subfamily. Prokaryotic clade 'B1' sub-subfamily. As to quaternary structure, homotetramer. It depends on Mg(2+) as a cofactor.

The protein resides in the cytoplasm. The catalysed reaction is beta-D-fructose 6-phosphate + ATP = beta-D-fructose 1,6-bisphosphate + ADP + H(+). The protein operates within carbohydrate degradation; glycolysis; D-glyceraldehyde 3-phosphate and glycerone phosphate from D-glucose: step 3/4. Allosterically activated by ADP and other diphosphonucleosides, and allosterically inhibited by phosphoenolpyruvate. Functionally, catalyzes the phosphorylation of D-fructose 6-phosphate to fructose 1,6-bisphosphate by ATP, the first committing step of glycolysis. In Lacticaseibacillus casei (strain BL23) (Lactobacillus casei), this protein is ATP-dependent 6-phosphofructokinase.